Here is a 197-residue protein sequence, read N- to C-terminus: ATP-dependent Clp protease proteolytic subunit 1 (197 aa).

The active-site Nucleophile is S100. Residue H125 is part of the active site.

This sequence belongs to the peptidase S14 family. In terms of assembly, fourteen ClpP subunits assemble into 2 heptameric rings which stack back to back to give a disk-like structure with a central cavity, resembling the structure of eukaryotic proteasomes.

Its subcellular location is the cytoplasm. It carries out the reaction Hydrolysis of proteins to small peptides in the presence of ATP and magnesium. alpha-casein is the usual test substrate. In the absence of ATP, only oligopeptides shorter than five residues are hydrolyzed (such as succinyl-Leu-Tyr-|-NHMec, and Leu-Tyr-Leu-|-Tyr-Trp, in which cleavage of the -Tyr-|-Leu- and -Tyr-|-Trp bonds also occurs).. Its function is as follows. Cleaves peptides in various proteins in a process that requires ATP hydrolysis. Has a chymotrypsin-like activity. Plays a major role in the degradation of misfolded proteins. The polypeptide is ATP-dependent Clp protease proteolytic subunit 1 (Gloeobacter violaceus (strain ATCC 29082 / PCC 7421)).